A 444-amino-acid polypeptide reads, in one-letter code: Type VI secretion system baseplate component TssK1 (444 aa).

As to quaternary structure, forms transient higher-order structures that correlated with dynamics of sheath component TssB1. Interacts with TssA1.

Its function is as follows. Core component of the H1 type VI (H1-T6SS) secretion system that plays a role in the release of toxins targeting both eukaryotic and prokaryotic species. Functions as a spatio-temporal marker for assembly of contractile apparatus made of TssB1 and TssC1. This role in assembly depends on TssM1. This is Type VI secretion system baseplate component TssK1 from Pseudomonas aeruginosa (strain ATCC 15692 / DSM 22644 / CIP 104116 / JCM 14847 / LMG 12228 / 1C / PRS 101 / PAO1).